Reading from the N-terminus, the 387-residue chain is Lactosylceramide alpha-2,3-sialyltransferase (387 aa).

Residues 1–33 lie on the Cytoplasmic side of the membrane; it reads MPNEFTSAKLRSDCSRTSLQWYTQTQHKMRRPS. The helical; Signal-anchor for type II membrane protein transmembrane segment at 34 to 54 threads the bilayer; the sequence is LLLKDILKCMLVVFGVWLLYI. The Extracellular portion of the chain corresponds to 55 to 387; it reads LKLNYTAEEC…VVQDLSGGIH (333 aa). 2 N-linked (GlcNAc...) asparagine glycosylation sites follow: asparagine 58 and asparagine 208. Cysteine 167 and cysteine 325 form a disulfide bridge.

The protein belongs to the glycosyltransferase 29 family.

The protein resides in the golgi apparatus membrane. It catalyses the reaction a beta-D-Gal-(1-&gt;4)-beta-D-Glc-(1&lt;-&gt;1)-Cer(d18:1(4E)) + CMP-N-acetyl-beta-neuraminate = a ganglioside GM3 (d18:1(4E)) + CMP + H(+). The catalysed reaction is ganglioside GA2 (d18:1(4E)/18:0) + CMP-N-acetyl-beta-neuraminate = ganglioside GM2 (d18:1(4E)/18:0) + CMP + H(+). It carries out the reaction a beta-D-Gal-(1&lt;-&gt;1')-ceramide + CMP-N-acetyl-beta-neuraminate = N-acetyl-alpha-neuraminosyl-(2-&gt;3)-beta-D-galactosyl-(1&lt;-&gt;1')-ceramide + CMP + H(+). The enzyme catalyses ganglioside GA1 (d18:1(4E)/18:0) + CMP-N-acetyl-beta-neuraminate = ganglioside GM1 (d18:1(4E)/18:0) + CMP + H(+). Its function is as follows. Transfers the sialyl group (N-acetyl-alpha-neuraminyl or NeuAc) from CMP-NeuAc to the non-reducing terminal galactose (Gal) of glycosphingolipids forming gangliosides (important molecules involved in the regulation of multiple cellular processes, including cell proliferation and differentiation, apoptosis, embryogenesis, development, and oncogenesis). Mainly involved in the biosynthesis of ganglioside GM3 but can also use different glycolipids as substrate acceptors such as D-galactosylceramide (GalCer), asialo-GM2 (GA2) and asialo-GM1 (GA1), although less preferentially than beta-D-Gal-(1-&gt;4)-beta-D-Glc-(1&lt;-&gt;1)-Cer (LacCer). The polypeptide is Lactosylceramide alpha-2,3-sialyltransferase (St3gal5) (Rattus norvegicus (Rat)).